Consider the following 520-residue polypeptide: Amine oxidase [flavin-containing] B (520 aa).

The residue at position 2 (S2) is an N-acetylserine. Over 2–489 the chain is Cytoplasmic; that stretch reads SNKSDVIVVG…TFLERHLPSV (488 aa). N6-acetyllysine occurs at positions 52 and 248. S-8alpha-FAD cysteine is present on C397. A helical; Anchor for type IV membrane protein membrane pass occupies residues 490–516; sequence PGLLKLFGLTTILSATALGFLAHKRGL. Topologically, residues 517 to 520 are mitochondrial intermembrane; the sequence is FVHF.

This sequence belongs to the flavin monoamine oxidase family. Monomer, homo- or heterodimer (containing two subunits of similar size). Each subunit contains a covalently bound flavin. Enzymatically active as monomer. FAD serves as cofactor.

The protein resides in the mitochondrion outer membrane. The enzyme catalyses a secondary aliphatic amine + O2 + H2O = a primary amine + an aldehyde + H2O2. It catalyses the reaction (R)-adrenaline + O2 + H2O = (R)-3,4-dihydroxymandelaldehyde + methylamine + H2O2. It carries out the reaction a primary methyl amine + O2 + H2O = an aldehyde + H2O2 + NH4(+). The catalysed reaction is benzylamine + O2 + H2O = benzaldehyde + H2O2 + NH4(+). The enzyme catalyses dopamine + O2 + H2O = 3,4-dihydroxyphenylacetaldehyde + H2O2 + NH4(+). It catalyses the reaction tyramine + O2 + H2O = (4-hydroxyphenyl)acetaldehyde + H2O2 + NH4(+). It carries out the reaction (R)-noradrenaline + O2 + H2O = (R)-3,4-dihydroxymandelaldehyde + H2O2 + NH4(+). The catalysed reaction is 2-phenylethylamine + O2 + H2O = 2-phenylacetaldehyde + H2O2 + NH4(+). The enzyme catalyses N-acetylputrescine + O2 + H2O = 4-acetamidobutanal + H2O2 + NH4(+). Its function is as follows. Catalyzes the oxidative deamination of primary and some secondary amines such as neurotransmitters, and exogenous amines including the tertiary amine, neurotoxin 1-methyl-4-phenyl-1,2,3,6-tetrahydropyridine (MPTP), with concomitant reduction of oxygen to hydrogen peroxide and participates in the metabolism of neuroactive and vasoactive amines in the central nervous system and peripheral tissues. Preferentially degrades benzylamine and phenylethylamine. The sequence is that of Amine oxidase [flavin-containing] B from Mus musculus (Mouse).